The sequence spans 283 residues: 2-dehydro-3-deoxyphosphooctonate aldolase (283 aa).

The protein belongs to the KdsA family.

It localises to the cytoplasm. The catalysed reaction is D-arabinose 5-phosphate + phosphoenolpyruvate + H2O = 3-deoxy-alpha-D-manno-2-octulosonate-8-phosphate + phosphate. The protein operates within carbohydrate biosynthesis; 3-deoxy-D-manno-octulosonate biosynthesis; 3-deoxy-D-manno-octulosonate from D-ribulose 5-phosphate: step 2/3. It functions in the pathway bacterial outer membrane biogenesis; lipopolysaccharide biosynthesis. The chain is 2-dehydro-3-deoxyphosphooctonate aldolase from Shewanella frigidimarina (strain NCIMB 400).